A 284-amino-acid polypeptide reads, in one-letter code: MDAIKKKMQMLKLDKENAIDRAEQAEADKKQAEDRCKQLEEEQQALQKKLKGTEDEVEKYSESVKEAQEKLEQAEKKATDAEADVASLNRRIQLVEEELDRAQERLATALQKLEEAEKAADESERGMKVIENRAMKDEEKMELQEMQLKEAKHIAEDSDRKYEEVARKLVILEGELERSEERAEVAESKCGDLEEELKIVTNNLKSLEAQADKYSTKEDKYEEEIKLLEEKLKEAETRAEFAERSVAKLEKTIDDLEDEVYAQKMKYKAISEELDNALNDITSL.

N-acetylmethionine is present on Met-1. The segment at 1–65 is disordered; sequence MDAIKKKMQM…EVEKYSESVK (65 aa). The stretch at 1–284 forms a coiled coil; it reads MDAIKKKMQM…DNALNDITSL (284 aa). 2 stretches are compositionally biased toward basic and acidic residues: residues 12 to 40 and 51 to 65; these read KLDKENAIDRAEQAEADKKQAEDRCKQLE and KGTEDEVEKYSESVK. Thr-53 bears the Phosphothreonine mark. Residue Ser-61 is modified to Phosphoserine; by PIK3CG. A Phosphothreonine modification is found at Thr-79. At Ser-87 the chain carries Phosphoserine. A Phosphothreonine modification is found at Thr-108. The tract at residues 117-136 is disordered; it reads EKAADESERGMKVIENRAMK. 3 positions are modified to phosphoserine: Ser-158, Ser-206, and Ser-215. Residue Thr-252 is modified to Phosphothreonine. The residue at position 261 (Tyr-261) is a Phosphotyrosine. The residue at position 271 (Ser-271) is a Phosphoserine. Position 282 is a phosphothreonine (Thr-282). Position 283 is a phosphoserine (Ser-283).

Belongs to the tropomyosin family. In terms of assembly, homodimer. Heterodimer of an alpha (TPM1, TPM3 or TPM4) and a beta (TPM2) chain. Phosphorylated on Ser-61 by PIK3CG. Phosphorylation on Ser-61 is required for ADRB2 internalization. In terms of tissue distribution, present in primary breast cancer tissue, absent from normal breast tissue.

The protein localises to the cytoplasm. It localises to the cytoskeleton. Binds to actin filaments in muscle and non-muscle cells. Plays a central role, in association with the troponin complex, in the calcium dependent regulation of vertebrate striated muscle contraction. Smooth muscle contraction is regulated by interaction with caldesmon. In non-muscle cells is implicated in stabilizing cytoskeleton actin filaments. The non-muscle isoform may have a role in agonist-mediated receptor internalization. In Homo sapiens (Human), this protein is Tropomyosin beta chain (TPM2).